Reading from the N-terminus, the 122-residue chain is UPF0102 protein XCV0816 (122 aa).

This sequence belongs to the UPF0102 family.

The sequence is that of UPF0102 protein XCV0816 from Xanthomonas euvesicatoria pv. vesicatoria (strain 85-10) (Xanthomonas campestris pv. vesicatoria).